The following is a 503-amino-acid chain: Glutamate--tRNA ligase 1 (503 aa).

The short motif at 17 to 27 is the 'HIGH' region element; the sequence is PSPTGFLHIGN. The 'KMSKS' region signature appears at 261-265; the sequence is KLSKR. Lys-264 contacts ATP.

The protein belongs to the class-I aminoacyl-tRNA synthetase family. Glutamate--tRNA ligase type 1 subfamily. As to quaternary structure, monomer.

It is found in the cytoplasm. The catalysed reaction is tRNA(Glu) + L-glutamate + ATP = L-glutamyl-tRNA(Glu) + AMP + diphosphate. Catalyzes the attachment of glutamate to tRNA(Glu) in a two-step reaction: glutamate is first activated by ATP to form Glu-AMP and then transferred to the acceptor end of tRNA(Glu). This chain is Glutamate--tRNA ligase 1, found in Levilactobacillus brevis (strain ATCC 367 / BCRC 12310 / CIP 105137 / JCM 1170 / LMG 11437 / NCIMB 947 / NCTC 947) (Lactobacillus brevis).